The sequence spans 756 residues: Protein SDA1 homolog (756 aa).

The stretch at 227–282 (EEEEDEAVKEKRAKDNFRKKSLAHRVGKKTKGRITRLAKSKVDLKKAKQEEDNKLQ) forms a coiled coil. Composition is skewed to acidic residues over residues 494 to 514 (AGEEFESDDDSDSDSDDEGWE) and 521 to 596 (ADDD…EEEE). Disordered stretches follow at residues 494-615 (AGEE…VLRT) and 638-756 (AREN…RGRH). The span at 605 to 615 (QQKEKVEVLRT) shows a compositional bias: basic and acidic residues. The segment covering 647–656 (DMDQDDDENG) has biased composition (acidic residues). Residues 677–691 (EEKLERIARAKEGRD) show a composition bias toward basic and acidic residues. Basic residues predominate over residues 725 to 735 (KTKKVRGKSLK). A compositionally biased stretch (basic and acidic residues) spans 736–749 (SFRDKQIGQREHSA).

Belongs to the SDA1 family.

It localises to the nucleus. Its subcellular location is the nucleolus. Required for 60S pre-ribosomal subunits export to the cytoplasm. This chain is Protein SDA1 homolog (sdad1), found in Dictyostelium discoideum (Social amoeba).